Here is a 140-residue protein sequence, read N- to C-terminus: Phosphopantetheine adenylyltransferase (140 aa).

S9 serves as a coordination point for substrate. ATP-binding positions include 9–10 (SF) and H17. K41, T74, and R88 together coordinate substrate. Residues 89–91 (GLR), E99, and 124–130 (KRSLSST) contribute to the ATP site.

Belongs to the bacterial CoaD family. Homohexamer. It depends on Mg(2+) as a cofactor.

The protein resides in the cytoplasm. It carries out the reaction (R)-4'-phosphopantetheine + ATP + H(+) = 3'-dephospho-CoA + diphosphate. It functions in the pathway cofactor biosynthesis; coenzyme A biosynthesis; CoA from (R)-pantothenate: step 4/5. Reversibly transfers an adenylyl group from ATP to 4'-phosphopantetheine, yielding dephospho-CoA (dPCoA) and pyrophosphate. The polypeptide is Phosphopantetheine adenylyltransferase (Mycoplasma mycoides subsp. mycoides SC (strain CCUG 32753 / NCTC 10114 / PG1)).